The following is a 235-amino-acid chain: Sugar fermentation stimulation protein homolog (235 aa).

It belongs to the SfsA family.

This is Sugar fermentation stimulation protein homolog from Maricaulis maris (strain MCS10) (Caulobacter maris).